The sequence spans 493 residues: ATP synthase subunit beta, chloroplastic (493 aa).

170 to 177 (GGAGVGKT) is a binding site for ATP.

It belongs to the ATPase alpha/beta chains family. In terms of assembly, F-type ATPases have 2 components, CF(1) - the catalytic core - and CF(0) - the membrane proton channel. CF(1) has five subunits: alpha(3), beta(3), gamma(1), delta(1), epsilon(1). CF(0) has four main subunits: a(1), b(1), b'(1) and c(9-12).

It localises to the plastid. The protein localises to the chloroplast thylakoid membrane. The enzyme catalyses ATP + H2O + 4 H(+)(in) = ADP + phosphate + 5 H(+)(out). Produces ATP from ADP in the presence of a proton gradient across the membrane. The catalytic sites are hosted primarily by the beta subunits. In Lachenalia pusilla (Cape cowslips), this protein is ATP synthase subunit beta, chloroplastic.